A 326-amino-acid polypeptide reads, in one-letter code: tRNA dimethylallyltransferase (326 aa).

18-25 (GPTASGKS) contacts ATP. Residue 20-25 (TASGKS) coordinates substrate. 2 interaction with substrate tRNA regions span residues 43–46 (DSMQ) and 167–171 (QRIAR).

It belongs to the IPP transferase family. As to quaternary structure, monomer. Mg(2+) serves as cofactor.

It catalyses the reaction adenosine(37) in tRNA + dimethylallyl diphosphate = N(6)-dimethylallyladenosine(37) in tRNA + diphosphate. Catalyzes the transfer of a dimethylallyl group onto the adenine at position 37 in tRNAs that read codons beginning with uridine, leading to the formation of N6-(dimethylallyl)adenosine (i(6)A). In Rhodospirillum rubrum (strain ATCC 11170 / ATH 1.1.1 / DSM 467 / LMG 4362 / NCIMB 8255 / S1), this protein is tRNA dimethylallyltransferase.